A 109-amino-acid chain; its full sequence is Large ribosomal subunit protein uL22 (109 aa).

Belongs to the universal ribosomal protein uL22 family. As to quaternary structure, part of the 50S ribosomal subunit.

In terms of biological role, this protein binds specifically to 23S rRNA; its binding is stimulated by other ribosomal proteins, e.g. L4, L17, and L20. It is important during the early stages of 50S assembly. It makes multiple contacts with different domains of the 23S rRNA in the assembled 50S subunit and ribosome. The globular domain of the protein is located near the polypeptide exit tunnel on the outside of the subunit, while an extended beta-hairpin is found that lines the wall of the exit tunnel in the center of the 70S ribosome. In Herminiimonas arsenicoxydans, this protein is Large ribosomal subunit protein uL22.